The sequence spans 564 residues: 2-succinyl-5-enolpyruvyl-6-hydroxy-3-cyclohexene-1-carboxylate synthase (564 aa).

The protein belongs to the TPP enzyme family. MenD subfamily. Homodimer. It depends on Mg(2+) as a cofactor. Requires Mn(2+) as cofactor. Thiamine diphosphate is required as a cofactor.

It carries out the reaction isochorismate + 2-oxoglutarate + H(+) = 5-enolpyruvoyl-6-hydroxy-2-succinyl-cyclohex-3-ene-1-carboxylate + CO2. It functions in the pathway quinol/quinone metabolism; 1,4-dihydroxy-2-naphthoate biosynthesis; 1,4-dihydroxy-2-naphthoate from chorismate: step 2/7. It participates in quinol/quinone metabolism; menaquinone biosynthesis. Functionally, catalyzes the thiamine diphosphate-dependent decarboxylation of 2-oxoglutarate and the subsequent addition of the resulting succinic semialdehyde-thiamine pyrophosphate anion to isochorismate to yield 2-succinyl-5-enolpyruvyl-6-hydroxy-3-cyclohexene-1-carboxylate (SEPHCHC). The chain is 2-succinyl-5-enolpyruvyl-6-hydroxy-3-cyclohexene-1-carboxylate synthase from Photorhabdus laumondii subsp. laumondii (strain DSM 15139 / CIP 105565 / TT01) (Photorhabdus luminescens subsp. laumondii).